The chain runs to 273 residues: MEAEPIPDSSMPAKLLAPPCLNLERLGGSPSQEKPRTPGCCRISERSLWPACQESVTALCFLQETVERLGQSPAQDTPVLGPCWDPMALGTQGRLLLDRDSKDTQTRISQKGRRLQPPGTPSAPPQRRPRKQLNPCRGTERVDPGFEGVTLKFQIKPDSSLQIIPTYSLPCSSRSQESPADAVGGPAAHPGGTEAHSAGSEALEPRRCASCRTQRTPLWRDAEDGTPLCNACGIRYKKYGTRCSSCWLVPRKNVQPKRLCGRCGVSLDPIQEG.

Disordered regions lie at residues 99–143 (RDSK…ERVD) and 172–201 (SSRS…AGSE). The GATA-type zinc finger occupies 208–232 (CASCRTQRTPLWRDAEDGTPLCNAC).

Its subcellular location is the nucleus. Its function is as follows. Transcriptional regulator that plays a key role in germ cell development. Determines the oogenic fate by activating key genes for the oogenic program and meiotic prophase entry. Acts downstream of bone morphogenetic protein (BMP) by regulating expression of genes required for the oogenic programs, which are repressed by Polycomb activities in sexually uncommitted germ cells. Regulates expression of STRA8, a central downstream effector for the meiotic program. Acts independently of retinoic acid (RA). In males, not required for germ-cell sex determination, but required to allow the spermatogonia to efficiently accomplish the meiotic prophase. This is GATA-type zinc finger protein 1 from Homo sapiens (Human).